The chain runs to 309 residues: Probable manganese-dependent inorganic pyrophosphatase (309 aa).

Residues His9, Asp13, Asp15, Asp75, His97, and Asp149 each contribute to the Mn(2+) site.

It belongs to the PPase class C family. Requires Mn(2+) as cofactor.

Its subcellular location is the cytoplasm. The enzyme catalyses diphosphate + H2O = 2 phosphate + H(+). In Bacillus velezensis (strain DSM 23117 / BGSC 10A6 / LMG 26770 / FZB42) (Bacillus amyloliquefaciens subsp. plantarum), this protein is Probable manganese-dependent inorganic pyrophosphatase.